The sequence spans 104 residues: SOSS complex subunit C (104 aa).

N-acetylalanine is present on Ala2. At Ser50 the chain carries Phosphoserine.

The protein belongs to the SOSS-C family. Component of the SOSS complex, composed of SOSS-B (SOSS-B1/NABP2 or SOSS-B2/NABP1), SOSS-A/INTS3 and SOSS-C/INIP. SOSS complexes containing SOSS-B1/NABP2 are more abundant than complexes containing SOSS-B2/NABP1. Interacts with INTS3; the interaction is direct.

The protein resides in the nucleus. Functionally, component of the SOSS complex, a multiprotein complex that functions downstream of the MRN complex to promote DNA repair and G2/M checkpoint. The SOSS complex associates with single-stranded DNA at DNA lesions and influences diverse endpoints in the cellular DNA damage response including cell-cycle checkpoint activation, recombinational repair and maintenance of genomic stability. Required for efficient homologous recombination-dependent repair of double-strand breaks (DSBs) and ATM-dependent signaling pathways. This Homo sapiens (Human) protein is SOSS complex subunit C (INIP).